The chain runs to 450 residues: Phosphoglucosamine mutase (450 aa).

Ser-102 serves as the catalytic Phosphoserine intermediate. Residues Ser-102, Asp-244, Asp-246, and Asp-248 each coordinate Mg(2+). Ser-102 carries the phosphoserine modification.

It belongs to the phosphohexose mutase family. Mg(2+) serves as cofactor. Activated by phosphorylation.

The catalysed reaction is alpha-D-glucosamine 1-phosphate = D-glucosamine 6-phosphate. In terms of biological role, catalyzes the conversion of glucosamine-6-phosphate to glucosamine-1-phosphate. The polypeptide is Phosphoglucosamine mutase (Bartonella bacilliformis (strain ATCC 35685 / KC583 / Herrer 020/F12,63)).